The chain runs to 188 residues: Large ribosomal subunit protein eL18 (188 aa).

Positions 147–188 (EANKHFGPAPGVPHSHTKAHVRSKGRQFERARGRRTSKGYKK) are disordered. Basic residues-rich tracts occupy residues 161 to 171 (SHTKAHVRSKG) and 178 to 188 (RGRRTSKGYKK).

Belongs to the eukaryotic ribosomal protein eL18 family.

It is found in the cytoplasm. This chain is Large ribosomal subunit protein eL18 (RpL18), found in Diaphorina citri (Asian citrus psyllid).